The sequence spans 156 residues: ATP synthase subunit b (156 aa).

A helical membrane pass occupies residues Leu7–Pro27.

Belongs to the ATPase B chain family. In terms of assembly, F-type ATPases have 2 components, F(1) - the catalytic core - and F(0) - the membrane proton channel. F(1) has five subunits: alpha(3), beta(3), gamma(1), delta(1), epsilon(1). F(0) has three main subunits: a(1), b(2) and c(10-14). The alpha and beta chains form an alternating ring which encloses part of the gamma chain. F(1) is attached to F(0) by a central stalk formed by the gamma and epsilon chains, while a peripheral stalk is formed by the delta and b chains.

Its subcellular location is the cell inner membrane. In terms of biological role, f(1)F(0) ATP synthase produces ATP from ADP in the presence of a proton or sodium gradient. F-type ATPases consist of two structural domains, F(1) containing the extramembraneous catalytic core and F(0) containing the membrane proton channel, linked together by a central stalk and a peripheral stalk. During catalysis, ATP synthesis in the catalytic domain of F(1) is coupled via a rotary mechanism of the central stalk subunits to proton translocation. Its function is as follows. Component of the F(0) channel, it forms part of the peripheral stalk, linking F(1) to F(0). In Shewanella sp. (strain ANA-3), this protein is ATP synthase subunit b.